The following is a 566-amino-acid chain: UvrABC system protein C (566 aa).

The region spanning 16–93 is the GIY-YIG domain; the sequence is EKPGVYLFKK…IQQYKPRYNV (78 aa). The region spanning 199–234 is the UVR domain; that stretch reads AEVLPKLYEKIEEFSKELMFEKCAHIRDQIIALENL.

Belongs to the UvrC family. As to quaternary structure, interacts with UvrB in an incision complex.

It is found in the cytoplasm. Its function is as follows. The UvrABC repair system catalyzes the recognition and processing of DNA lesions. UvrC both incises the 5' and 3' sides of the lesion. The N-terminal half is responsible for the 3' incision and the C-terminal half is responsible for the 5' incision. This is UvrABC system protein C from Aquifex aeolicus (strain VF5).